A 1070-amino-acid chain; its full sequence is DNA-directed RNA polymerase subunit beta (1070 aa).

This sequence belongs to the RNA polymerase beta chain family. In plastids the minimal PEP RNA polymerase catalytic core is composed of four subunits: alpha, beta, beta', and beta''. When a (nuclear-encoded) sigma factor is associated with the core the holoenzyme is formed, which can initiate transcription.

It is found in the plastid. Its subcellular location is the chloroplast. The enzyme catalyses RNA(n) + a ribonucleoside 5'-triphosphate = RNA(n+1) + diphosphate. In terms of biological role, DNA-dependent RNA polymerase catalyzes the transcription of DNA into RNA using the four ribonucleoside triphosphates as substrates. The protein is DNA-directed RNA polymerase subunit beta of Angiopteris evecta (Mule's foot fern).